The sequence spans 133 residues: Cytochrome b5 (133 aa).

Residues 4-86 (EKEYILDEIS…LKNYLVGNFK (83 aa)) enclose the Cytochrome b5 heme-binding domain. The heme site is built by histidine 45 and histidine 69. Residues 108 to 128 (SGTGIMLIVLMALFAIAYGYY) form a helical membrane-spanning segment.

The protein belongs to the cytochrome b5 family. As to quaternary structure, interacts with alternative squalene epoxidase PHATRDRAFT_45494.

It is found in the endoplasmic reticulum membrane. Functionally, hemoprotein that functions as an electron carrier for membrane bound monooxygenases involved in sterol biosynthesis. The polypeptide is Cytochrome b5 (Phaeodactylum tricornutum (strain CCAP 1055/1)).